The chain runs to 296 residues: Methylsterol monooxygenase 1 (296 aa).

2 helical membrane-spanning segments follow: residues 55-75 (LLVH…FQFI) and 100-120 (TLIF…YYFT). A Fatty acid hydroxylase domain is found at 145–274 (CAVIEDAWHY…FTWWDRIFGT (130 aa)). A Histidine box-1 motif is present at residues 157–161 (HRLLH). Residues 170–174 (HKVHH) carry the Histidine box-2 motif. The helical transmembrane segment at 199 to 219 (FFIGIVVFCNHVVLLWAWVIC) threads the bilayer. Residues 249 to 255 (FHDFHHM) carry the Histidine box-3 motif.

Belongs to the sterol desaturase family. The cofactor is Fe cation.

Its subcellular location is the endoplasmic reticulum membrane. The enzyme catalyses 4,4-dimethyl-5alpha-cholest-7-en-3beta-ol + 6 Fe(II)-[cytochrome b5] + 3 O2 + 5 H(+) = 4alpha-carboxy-4beta-methyl-5alpha-cholest-7-ene-3beta-ol + 6 Fe(III)-[cytochrome b5] + 4 H2O. It participates in steroid biosynthesis; zymosterol biosynthesis; zymosterol from lanosterol: step 3/6. Catalyzes the first step in the removal of the two C-4 methyl groups of 4,4-dimethylzymosterol. This Gallus gallus (Chicken) protein is Methylsterol monooxygenase 1 (MSMO1).